Here is a 100-residue protein sequence, read N- to C-terminus: Small ribosomal subunit protein uS14c (100 aa).

This sequence belongs to the universal ribosomal protein uS14 family. Part of the 30S ribosomal subunit.

Its subcellular location is the plastid. It is found in the chloroplast. Its function is as follows. Binds 16S rRNA, required for the assembly of 30S particles. The polypeptide is Small ribosomal subunit protein uS14c (Tupiella akineta (Green alga)).